Here is a 98-residue protein sequence, read N- to C-terminus: Large ribosomal subunit protein uL23 (98 aa).

Belongs to the universal ribosomal protein uL23 family. As to quaternary structure, part of the 50S ribosomal subunit. Contacts protein L29, and trigger factor when it is bound to the ribosome.

Its function is as follows. One of the early assembly proteins it binds 23S rRNA. One of the proteins that surrounds the polypeptide exit tunnel on the outside of the ribosome. Forms the main docking site for trigger factor binding to the ribosome. The chain is Large ribosomal subunit protein uL23 from Hahella chejuensis (strain KCTC 2396).